Consider the following 626-residue polypeptide: Chaperone protein HtpG (626 aa).

The tract at residues 1 to 338 is a; substrate-binding; sequence MTANKNQKKT…SNDLPLNVSR (338 aa). The interval 339–553 is b; sequence EILQDHKLVY…SNEMSTQMAK (215 aa). The tract at residues 554-626 is c; that stretch reads LFSAAGQTVP…ARINDLLINN (73 aa).

Belongs to the heat shock protein 90 family. Homodimer.

The protein localises to the cytoplasm. Its function is as follows. Molecular chaperone. Has ATPase activity. The sequence is that of Chaperone protein HtpG from Buchnera aphidicola subsp. Baizongia pistaciae (strain Bp).